The following is a 144-amino-acid chain: Fluoride-specific ion channel FluC (144 aa).

4 helical membrane passes run 7–27 (LIVM…SVAA), 33–53 (FIPW…IGFF), 71–91 (LFVM…SLQT), and 105–125 (VNVA…HITA). Na(+)-binding residues include G79 and T82.

This sequence belongs to the fluoride channel Fluc/FEX (TC 1.A.43) family.

It localises to the cell inner membrane. It carries out the reaction fluoride(in) = fluoride(out). Na(+) is not transported, but it plays an essential structural role and its presence is essential for fluoride channel function. Its function is as follows. Fluoride-specific ion channel. Important for reducing fluoride concentration in the cell, thus reducing its toxicity. The chain is Fluoride-specific ion channel FluC from Gluconobacter oxydans (strain 621H) (Gluconobacter suboxydans).